Reading from the N-terminus, the 1657-residue chain is Alsin (1657 aa).

RCC1 repeat units lie at residues 59–108, 109–167, and 169–218; these read DGEV…AVTD, NGVA…ALSI, and REIW…ALVQ. The interval 432 to 480 is disordered; it reads TGAQAGSSAIGPEGLKDSREEQVKQESMQGKKSSSLVDIREEETEGGSR. The segment covering 445 to 455 has biased composition (basic and acidic residues); sequence GLKDSREEQVK. Over residues 456–467 the composition is skewed to polar residues; the sequence is QESMQGKKSSSL. A phosphoserine mark is found at Ser465, Ser466, Ser483, and Ser492. Thr510 is modified (phosphothreonine). RCC1 repeat units lie at residues 525 to 576 and 578 to 627; these read RTEV…ALTA and SQVY…FLVD. N6-acetyllysine is present on Lys533. In terms of domain architecture, DH spans 690 to 885; sequence GYIASLHELA…ECLALHLGRK (196 aa). The region spanning 901-1007 is the PH domain; sequence GKMTDSLRKP…RAISQAVDQA (107 aa). MORN repeat units lie at residues 1049–1071, 1072–1094, 1100–1122, 1123–1145, 1151–1173, 1175–1197, 1198–1220, and 1221–1244; these read YDGR…DGKM, YSGM…NKAM, YVGH…SGEV, FEGC…KLTS, FIGQ…TRGE, YMGM…FGLY, YEGN…DDTI, and YEGE…NGDY. Residue Ser1335 is modified to Phosphoserine. The region spanning 1513-1657 is the VPS9 domain; the sequence is KQPDIALLGF…YYQIQREKLN (145 aa).

As to quaternary structure, forms a heteromeric complex with ALS2CL. Interacts with ALS2CL.

In terms of biological role, may act as a GTPase regulator. Controls survival and growth of spinal motoneurons. The polypeptide is Alsin (ALS2) (Homo sapiens (Human)).